A 440-amino-acid polypeptide reads, in one-letter code: Ribosomal protein uS12 methylthiotransferase RimO (440 aa).

One can recognise an MTTase N-terminal domain in the interval 1–117 (MKVHLTSLGC…VIEAVAGKES (117 aa)). The [4Fe-4S] cluster site is built by Cys10, Cys46, Cys80, Cys155, Cys159, and Cys162. Residues 141 to 371 (CATPHTVYVK…MTAQIDISSR (231 aa)) form the Radical SAM core domain. One can recognise a TRAM domain in the interval 374–440 (AKRVGSREPV…SAYDLTGEAQ (67 aa)).

Belongs to the methylthiotransferase family. RimO subfamily. The cofactor is [4Fe-4S] cluster.

It localises to the cytoplasm. It carries out the reaction L-aspartate(89)-[ribosomal protein uS12]-hydrogen + (sulfur carrier)-SH + AH2 + 2 S-adenosyl-L-methionine = 3-methylsulfanyl-L-aspartate(89)-[ribosomal protein uS12]-hydrogen + (sulfur carrier)-H + 5'-deoxyadenosine + L-methionine + A + S-adenosyl-L-homocysteine + 2 H(+). In terms of biological role, catalyzes the methylthiolation of an aspartic acid residue of ribosomal protein uS12. The chain is Ribosomal protein uS12 methylthiotransferase RimO from Desulfosudis oleivorans (strain DSM 6200 / JCM 39069 / Hxd3) (Desulfococcus oleovorans).